Here is a 121-residue protein sequence, read N- to C-terminus: Large ribosomal subunit protein bL12 (121 aa).

Belongs to the bacterial ribosomal protein bL12 family. As to quaternary structure, homodimer. Part of the ribosomal stalk of the 50S ribosomal subunit. Forms a multimeric L10(L12)X complex, where L10 forms an elongated spine to which 2 to 4 L12 dimers bind in a sequential fashion. Binds GTP-bound translation factors.

In terms of biological role, forms part of the ribosomal stalk which helps the ribosome interact with GTP-bound translation factors. Is thus essential for accurate translation. In Oenococcus oeni (strain ATCC BAA-331 / PSU-1), this protein is Large ribosomal subunit protein bL12.